Reading from the N-terminus, the 389-residue chain is Chalcone synthase 1 (389 aa).

Residue Cys164 is part of the active site.

Belongs to the thiolase-like superfamily. Chalcone/stilbene synthases family.

The enzyme catalyses (E)-4-coumaroyl-CoA + 3 malonyl-CoA + 3 H(+) = 2',4,4',6'-tetrahydroxychalcone + 3 CO2 + 4 CoA. Its pathway is secondary metabolite biosynthesis; flavonoid biosynthesis. In terms of biological role, the primary product of this enzyme is 4,2',4',6'-tetrahydroxychalcone (also termed naringenin-chalcone or chalcone) which can under specific conditions spontaneously isomerize into naringenin. The sequence is that of Chalcone synthase 1 (CHS1) from Cicer arietinum (Chickpea).